We begin with the raw amino-acid sequence, 126 residues long: Anti-adapter protein IraD (126 aa).

Belongs to the GpW/Gp25 family. IraD subfamily. Interacts with RssB.

It is found in the cytoplasm. In terms of biological role, inhibits RpoS proteolysis by regulating RssB activity, thereby increasing the stability of the sigma stress factor RpoS during oxidative stress. Its effect on RpoS stability is due to its interaction with RssB, which probably blocks the interaction of RssB with RpoS, and the consequent delivery of the RssB-RpoS complex to the ClpXP protein degradation pathway. The sequence is that of Anti-adapter protein IraD from Salmonella choleraesuis (strain SC-B67).